The chain runs to 859 residues: Low-density lipoprotein receptor-related protein 12 (859 aa).

A signal peptide spans 1–32 (MARRWSTKESPRWRSALLLLFLAGVYGNGALA). Over 33–492 (EHSENVHISG…ENCPVIVPTR (460 aa)) the chain is Extracellular. Intrachain disulfides connect cysteine 47–cysteine 76 and cysteine 103–cysteine 122. The CUB 1 domain occupies 47-159 (CGETPEQIRA…KGFRLAYFSG (113 aa)). A glycan (N-linked (GlcNAc...) asparagine) is linked at asparagine 75. Asparagine 146 is a glycosylation site (N-linked (GlcNAc...) asparagine). 2 LDL-receptor class A domains span residues 165-201 (NCAC…EICA) and 214-255 (PCAY…IDCD). Cystine bridges form between cysteine 166/cysteine 178, cysteine 173/cysteine 191, cysteine 185/cysteine 200, cysteine 215/cysteine 232, cysteine 222/cysteine 245, cysteine 239/cysteine 254, and cysteine 259/cysteine 285. A CUB 2 domain is found at 259–372 (CGQWLKYFYG…RGFNATYQVD (114 aa)). Asparagine 284 and asparagine 366 each carry an N-linked (GlcNAc...) asparagine glycan. 3 consecutive LDL-receptor class A domains span residues 374–411 (FCLP…INCT), 412–449 (MCQK…KNCF), and 450–486 (FCQP…ENCP). 9 disulfide bridges follow: cysteine 375–cysteine 388, cysteine 382–cysteine 401, cysteine 395–cysteine 410, cysteine 413–cysteine 426, cysteine 420–cysteine 439, cysteine 433–cysteine 448, cysteine 451–cysteine 463, cysteine 458–cysteine 476, and cysteine 470–cysteine 485. A glycan (N-linked (GlcNAc...) asparagine) is linked at asparagine 409. Asparagine 441 is a glycosylation site (N-linked (GlcNAc...) asparagine). Residues 493–513 (VITAAVIGSLICGLLLVIALG) form a helical membrane-spanning segment. The Cytoplasmic segment spans residues 514–859 (CTCKLYSLRM…TSDDEALLLC (346 aa)). Disordered stretches follow at residues 623 to 678 (ADGD…LPQK), 693 to 723 (ASSS…SPAR), 748 to 770 (SSVS…REDD), and 802 to 823 (QGQG…SNRD). Composition is skewed to polar residues over residues 748 to 757 (SSVSQNQSPL) and 802 to 814 (QGQG…NATN).

Belongs to the LDLR family. May interact with RACK1, ZFYVE9 and NMRK2.

It is found in the membrane. The protein resides in the coated pit. Its function is as follows. Probable receptor, which may be involved in the internalization of lipophilic molecules and/or signal transduction. May act as a tumor suppressor. The chain is Low-density lipoprotein receptor-related protein 12 (LRP12) from Pongo abelii (Sumatran orangutan).